The primary structure comprises 452 residues: Phosphoglucosamine mutase (452 aa).

S108 acts as the Phosphoserine intermediate in catalysis. Residues S108, D247, D249, and D251 each contribute to the Mg(2+) site. S108 is modified (phosphoserine).

It belongs to the phosphohexose mutase family. It depends on Mg(2+) as a cofactor. Activated by phosphorylation.

It carries out the reaction alpha-D-glucosamine 1-phosphate = D-glucosamine 6-phosphate. Catalyzes the conversion of glucosamine-6-phosphate to glucosamine-1-phosphate. The protein is Phosphoglucosamine mutase of Paraburkholderia phymatum (strain DSM 17167 / CIP 108236 / LMG 21445 / STM815) (Burkholderia phymatum).